The sequence spans 391 residues: Phosphoglycerate kinase (391 aa).

Substrate contacts are provided by residues 21–23 (DLN), Arg-36, 59–62 (HLGR), Arg-113, and Arg-146. Residues Lys-197, Glu-319, and 345–348 (GGDT) each bind ATP.

This sequence belongs to the phosphoglycerate kinase family. As to quaternary structure, monomer.

The protein localises to the cytoplasm. The enzyme catalyses (2R)-3-phosphoglycerate + ATP = (2R)-3-phospho-glyceroyl phosphate + ADP. Its pathway is carbohydrate degradation; glycolysis; pyruvate from D-glyceraldehyde 3-phosphate: step 2/5. This is Phosphoglycerate kinase from Shewanella sp. (strain MR-7).